The primary structure comprises 450 residues: UDP-N-acetylmuramoylalanine--D-glutamate ligase (450 aa).

Position 115-121 (glycine 115–threonine 121) interacts with ATP.

Belongs to the MurCDEF family.

Its subcellular location is the cytoplasm. The enzyme catalyses UDP-N-acetyl-alpha-D-muramoyl-L-alanine + D-glutamate + ATP = UDP-N-acetyl-alpha-D-muramoyl-L-alanyl-D-glutamate + ADP + phosphate + H(+). It participates in cell wall biogenesis; peptidoglycan biosynthesis. Cell wall formation. Catalyzes the addition of glutamate to the nucleotide precursor UDP-N-acetylmuramoyl-L-alanine (UMA). This Syntrophotalea carbinolica (strain DSM 2380 / NBRC 103641 / GraBd1) (Pelobacter carbinolicus) protein is UDP-N-acetylmuramoylalanine--D-glutamate ligase.